We begin with the raw amino-acid sequence, 629 residues long: Flap endonuclease GEN-like 1 (629 aa).

Positions 1–87 are N-domain; that stretch reads MGVGGSFWDL…DGQPSPLKSQ (87 aa). The interval 2–98 is XPG-N domain; the sequence is GVGGSFWDLL…RAARFFRGSG (97 aa). Mg(2+) contacts are provided by aspartate 31, aspartate 78, glutamate 148, glutamate 150, aspartate 169, aspartate 171, and aspartate 221. The XPG-I domain stretch occupies residues 136-221; it reads EYLGMPVLRA…VAMALLVGSD (86 aa). An I-domain region spans residues 136-225; it reads EYLGMPVLRA…LLVGSDHDLH (90 aa). The segment at 221 to 421 is 5'-3' exonuclease domain; that stretch reads DHDLHGVPGF…MLPMLSTIYL (201 aa). A disordered region spans residues 594–617; sequence KKGLSGDSGKDGSRKSSDVDLSKN. Residues 601–614 show a composition bias toward basic and acidic residues; that stretch reads SGKDGSRKSSDVDL.

The protein belongs to the XPG/RAD2 endonuclease family. GEN subfamily. In terms of assembly, monomer. Interacts with PCNA. PCNA stimulates the nuclease activity without altering cleavage specificity. It depends on Mg(2+) as a cofactor. Highly expressed in anthers. Expressed in roots and leaves.

The protein localises to the nucleus. Its function is as follows. Endonuclease which cleaves flap structures at the junction between single-stranded DNA and double-stranded DNA. Possesses both single-stranded and double-stranded DNA-binding activities. Involved in early microspore development, but does not alter meiosis or tapetal cells development. Possesses Holliday junction (HJ) resolvase activity in vitro. Cleaves HJ at symmetrically related sites of the branch point. This chain is Flap endonuclease GEN-like 1, found in Oryza sativa subsp. japonica (Rice).